Reading from the N-terminus, the 515-residue chain is MPKKRRSRRRPQPIIRWVSLTLTLLALCRPIQTWRCSLSLGNQQWMTAYNQEAKFSISIDQILEAHNQSPFCAKSPRYTLDSVNGYPKIYWPPPQGRRRFGARAMVTYDCEPRCPYVGADRFDCPHWDNASQADQGSFYVNHQILFLHLKQCHGIFTLTWEIWGYDPLITFSLHKIPDPPQPDFPQLNSDWVPSVRSWALLLNQTARAFPDCAICWEPSPPWAPEILVYNKTISSSGPGLALPDAQIFWVNTSSFNTTQGWHHPSQRLLFNVSQGNALLLPPISLVNLSTASSAPPTRVRRSPVAALTLGLALSVGLTGINVAVSALSHQRLTSLIHVLEQDQQRLITAINQTHYNLLNVASVVAQNRRGLDWLYIRLGFQSLCPTINEPCCFLRIQNDSIIRLGDLQPLSQRVSTDWQWPWNWDLGLTAWVRETIHSVLSLFLLALFLLFLAPCLIKCLTSRLLKLLRQAPHFPEISLTPKPDSDYQALLPSAPEIYSHLSPVKPDYINLRPCP.

A signal peptide spans 1-33; the sequence is MPKKRRSRRRPQPIIRWVSLTLTLLALCRPIQT. Over 34-435 the chain is Extracellular; it reads WRCSLSLGNQ…LGLTAWVRET (402 aa). N-linked (GlcNAc...) asparagine; by host glycans are attached at residues Asn129 and Asn203. The CXXC signature appears at 212–215; the sequence is CAIC. Disulfide bonds link Cys212–Cys215, Cys212–Cys392, and Cys384–Cys391. N-linked (GlcNAc...) asparagine; by host glycosylation is found at Asn230, Asn251, Asn256, Asn271, and Asn287. The interval 304–324 is fusion peptide; that stretch reads VAALTLGLALSVGLTGINVAV. Coiled coils occupy residues 330–376 and 388–420; these read QRLT…WLYI and NEPCCFLRIQNDSIIRLGDLQPLSQRVSTDWQW. The N-linked (GlcNAc...) asparagine; by host glycan is linked to Asn351. The segment at 365-381 is immunosuppression; it reads AQNRRGLDWLYIRLGFQ. Residues 384–392 carry the CX6CC motif; that stretch reads CPTINEPCC. N-linked (GlcNAc...) asparagine; by host glycosylation occurs at Asn398. The helical transmembrane segment at 436–456 threads the bilayer; the sequence is IHSVLSLFLLALFLLFLAPCL. A lipid anchor (S-palmitoyl cysteine; by host) is attached at Cys455. Over 457–515 the chain is Cytoplasmic; the sequence is IKCLTSRLLKLLRQAPHFPEISLTPKPDSDYQALLPSAPEIYSHLSPVKPDYINLRPCP.

As to quaternary structure, the mature envelope protein (Env) consists of a trimer of SU-TM heterodimers attached by a labile interchain disulfide bond. In terms of processing, specific enzymatic cleavages in vivo yield mature proteins. Envelope glycoproteins are synthesized as an inactive precursor that is N-glycosylated and processed likely by host cell furin or by a furin-like protease in the Golgi to yield the mature SU and TM proteins. The cleavage site between SU and TM requires the minimal sequence [KR]-X-[KR]-R. The CXXC motif is highly conserved across a broad range of retroviral envelope proteins. It is thought to participate in the formation of a labile disulfide bond possibly with the CX6CC motif present in the transmembrane protein. Isomerization of the intersubunit disulfide bond to an SU intrachain disulfide bond is thought to occur upon receptor recognition in order to allow membrane fusion. Post-translationally, the transmembrane protein is palmitoylated.

The protein resides in the virion membrane. The protein localises to the host cell membrane. In terms of biological role, the surface protein (SU) attaches the virus to the host cell by binding to its receptor. This interaction triggers the refolding of the transmembrane protein (TM) and is thought to activate its fusogenic potential by unmasking its fusion peptide. Fusion occurs at the host cell plasma membrane. Its function is as follows. The transmembrane protein (TM) acts as a class I viral fusion protein. Under the current model, the protein has at least 3 conformational states: pre-fusion native state, pre-hairpin intermediate state, and post-fusion hairpin state. During viral and target cell membrane fusion, the coiled coil regions (heptad repeats) assume a trimer-of-hairpins structure, positioning the fusion peptide in close proximity to the C-terminal region of the ectodomain. The formation of this structure appears to drive apposition and subsequent fusion of viral and target cell membranes. Membranes fusion leads to delivery of the nucleocapsid into the cytoplasm. The protein is Envelope glycoprotein (env) of Bovine leukemia virus (isolate American FLK) (BLV).